A 62-amino-acid chain; its full sequence is Photosystem II reaction center protein Z (62 aa).

Transmembrane regions (helical) follow at residues 8–28 (ALVALVLVSFVLVVGVPVAYA) and 41–61 (WLGSGVWIALVLLVGLLNFFV).

This sequence belongs to the PsbZ family. In terms of assembly, PSII is composed of 1 copy each of membrane proteins PsbA, PsbB, PsbC, PsbD, PsbE, PsbF, PsbH, PsbI, PsbJ, PsbK, PsbL, PsbM, PsbT, PsbX, PsbY, PsbZ, Psb30/Ycf12, peripheral proteins PsbO, CyanoQ (PsbQ), PsbU, PsbV and a large number of cofactors. It forms dimeric complexes.

The protein localises to the cellular thylakoid membrane. Its function is as follows. May control the interaction of photosystem II (PSII) cores with the light-harvesting antenna, regulates electron flow through the 2 photosystem reaction centers. PSII is a light-driven water plastoquinone oxidoreductase, using light energy to abstract electrons from H(2)O, generating a proton gradient subsequently used for ATP formation. The chain is Photosystem II reaction center protein Z from Nostoc sp. (strain PCC 7120 / SAG 25.82 / UTEX 2576).